The sequence spans 445 residues: Acyl-lipid (7-3)-desaturase (445 aa).

Residues 11–91 (VAELRAAEVA…MSKFFVGSLD (81 aa)) enclose the Cytochrome b5 heme-binding domain. 2 residues coordinate heme: His-50 and His-73. A run of 2 helical transmembrane segments spans residues 126-146 (YWLK…YMLL) and 148-168 (GKTL…GLNI). Residues 170–174 (HDANH) carry the Histidine box-1 motif. The short motif at 205–210 (HVVMHH) is the Histidine box-2 element. 3 consecutive transmembrane segments (helical) span residues 247 to 267 (ILPG…LELL), 283 to 303 (LFAP…ALPL), and 312 to 332 (ALCI…FFFI). The Histidine box-3 motif lies at 380 to 384 (QIEHH).

The protein belongs to the fatty acid desaturase type 1 family. It depends on Fe(2+) as a cofactor.

The protein localises to the membrane. It catalyses the reaction a (7Z,10Z,13Z,16Z,19Z)-docosapentaenoyl-containing glycerolipid + 2 Fe(II)-[cytochrome b5] + O2 + 2 H(+) = a (4Z,7Z,10Z,13Z,16Z,19Z)-docosahexaenoyl-containing glycerolipid + 2 Fe(III)-[cytochrome b5] + 2 H2O. It carries out the reaction a (7Z,10Z,13Z,16Z)-docosatetraenoyl-containing glycerolipid + 2 Fe(II)-[cytochrome b5] + O2 + 2 H(+) = a (4Z,7Z,10Z,13Z,16Z)-docosapentaenoyl-containing glycerolipid + 2 Fe(III)-[cytochrome b5] + 2 H2O. In terms of biological role, fatty acid desaturase that introduces a cis double bond at the 4-position in 22-carbon polyunsaturated fatty acids that contain a Delta(7) double bond, resulting in the production of delta-4 desaturated fatty acid docosahexanoic acid (DHA). Mediates desaturation of 22:5n-3 and 22:4n-6 into 22:6n-3 and 22:5n-6 respectively. In Diacronema lutheri (Unicellular marine alga), this protein is Acyl-lipid (7-3)-desaturase.